Consider the following 527-residue polypeptide: DNA polymerase epsilon subunit 2 (527 aa).

This sequence belongs to the DNA polymerase epsilon subunit B family. As to quaternary structure, component of the DNA polymerase epsilon complex consisting of four subunits: the catalytic subunit POLE and the accessory subunits POLE2, POLE3 and POLE4.

It localises to the nucleus. In terms of biological role, accessory component of the DNA polymerase epsilon complex. Participates in DNA repair and in chromosomal DNA replication. The protein is DNA polymerase epsilon subunit 2 (Pole2) of Mus musculus (Mouse).